Here is a 296-residue protein sequence, read N- to C-terminus: uncharacterized protein (296 aa).

It localises to the mitochondrion. This is an uncharacterized protein from Podospora anserina (strain S / ATCC MYA-4624 / DSM 980 / FGSC 10383) (Pleurage anserina).